Reading from the N-terminus, the 207-residue chain is Large ribosomal subunit protein uL4 (207 aa).

Positions 44–81 (KRQGTQSAKTRSEVRGGGRKPWRQKGTGRARQGSIRSP) are disordered. Over residues 60-71 (GGRKPWRQKGTG) the composition is skewed to basic residues.

Belongs to the universal ribosomal protein uL4 family. As to quaternary structure, part of the 50S ribosomal subunit.

One of the primary rRNA binding proteins, this protein initially binds near the 5'-end of the 23S rRNA. It is important during the early stages of 50S assembly. It makes multiple contacts with different domains of the 23S rRNA in the assembled 50S subunit and ribosome. In terms of biological role, forms part of the polypeptide exit tunnel. This Finegoldia magna (strain ATCC 29328 / DSM 20472 / WAL 2508) (Peptostreptococcus magnus) protein is Large ribosomal subunit protein uL4.